The sequence spans 236 residues: Phosphoribosylaminoimidazole-succinocarboxamide synthase (236 aa).

This sequence belongs to the SAICAR synthetase family.

The catalysed reaction is 5-amino-1-(5-phospho-D-ribosyl)imidazole-4-carboxylate + L-aspartate + ATP = (2S)-2-[5-amino-1-(5-phospho-beta-D-ribosyl)imidazole-4-carboxamido]succinate + ADP + phosphate + 2 H(+). It participates in purine metabolism; IMP biosynthesis via de novo pathway; 5-amino-1-(5-phospho-D-ribosyl)imidazole-4-carboxamide from 5-amino-1-(5-phospho-D-ribosyl)imidazole-4-carboxylate: step 1/2. This is Phosphoribosylaminoimidazole-succinocarboxamide synthase from Rickettsia felis (strain ATCC VR-1525 / URRWXCal2) (Rickettsia azadi).